Reading from the N-terminus, the 624-residue chain is MAEAPQVVEIDPDFEPLPRPRSCTWPLPRPEFSQSNSATSSPAPSGGAAANPDGAAGLPSASAAAVNADFMSNLSLLEESGDFQQAPGSVAAAAPLSQHPPVPPAAAAAAAGGQLAGQPRKSSSSRRNAWGNLSYADLITKAIESSAEKRLTLSQIYEWMVKSVPYFKDKGDSNSSAGWKNSIRHNLSLHSKFIRVQNEGTGKSSWWMLNPEGGKSGKSPRRRAASMDNNSKFAKSRGRAAKKKASLQSGQEGAGDSPGSQFSKWPASPGSHSNDDFDNWSTFRPRTSSNASTISGRLSPIMTEQDDLGDGDVHSMVYPPSAAKMASTLPSLSEISNPENMENLLDNLNLLSSPTSLTVSTQSSPGTMMQQTPCYSFAPPNTSLNSPTPNYQKYTYGQSSMSPLPQMPMQTLQDNKSSYGGMSQYCAPGLLKELLTSDSPPHNDIMTPVDPGVAQANSRVLGQSVLMGPNSVMPAYGGQASHNKMMTPSSHTHPGHAQSTSAVNGRALPHAVNTMPHTSGMNRLAPVKTALQVPLAHPMQMSALGGYSSVSSCNGYGRMGVLHQEKLPSDLDGMFIERLDCDMESIIRNDLMDGDTLDFNFDNVLPNQSFPHSVKTTTHSWVSG.

Disordered regions lie at residues 1–62 and 94–128; these read MAEA…PSAS and APLS…SRRN. Thr-24 carries the phosphothreonine; by PKB/AKT1 or PKB/AKT2 and SGK1 modification. Low complexity-rich tracts occupy residues 37–62 and 105–119; these read SATS…PSAS and AAAA…AGQP. Positions 130–224 form a DNA-binding region, fork-head; that stretch reads WGNLSYADLI…KSGKSPRRRA (95 aa). DNA-binding regions lie at residues 181–188 and 204–207; these read NSIRHNLS and SSWW. Ser-182 is modified (phosphoserine; by STK4/MST1). Residues Ser-188, Ser-204, and Ser-205 each carry the phosphoserine modification. The tract at residues 204–306 is disordered; sequence SSWWMLNPEG…RLSPIMTEQD (103 aa). N6-acetyllysine occurs at positions 215 and 218. Residue Ser-219 is modified to Phosphoserine; by CDK1. Omega-N-methylarginine; by PRMT1 occurs at positions 221 and 223. Positions 221-223 match the Nuclear localization signal motif; that stretch reads RRR. Residue Ser-226 is modified to Phosphoserine; by PKB/AKT1 and SGK1. N6-acetyllysine is present on residues Lys-232, Lys-235, and Lys-244. Basic residues predominate over residues 234 to 245; that stretch reads AKSRGRAAKKKA. A sufficient for interaction with NLK region spans residues 253 to 532; the sequence is GAGDSPGSQF…RLAPVKTALQ (280 aa). Ser-257 and Ser-268 each carry phosphoserine. Positions 279-296 are enriched in polar residues; that stretch reads NWSTFRPRTSSNASTISG. Position 289 is a phosphoserine; by PKB/AKT1 (Ser-289). Ser-292 bears the Phosphoserine; by CK1 and SGK1 mark. Position 295 is a phosphoserine; by CK1 (Ser-295). A Phosphoserine; by DYRK1A modification is found at Ser-299. Phosphothreonine is present on Thr-303. The required for interaction with RUNX2 stretch occupies residues 333–428; it reads SEISNPENME…YGGMSQYCAP (96 aa). Residue Lys-393 is modified to N6-acetyllysine. Residues 431 to 435 carry the Required for interaction with SIRT1 motif; sequence LKELL.

As to quaternary structure, interacts with LRPPRC. Interacts with RUNX2; the interaction inhibits RUNX2 transcriptional activity and mediates the IGF1/insulin-dependent BGLAP expression in osteoblasts Interacts with PPP2R1A; the interaction regulates the dephosphorylation of FOXO1 at Thr-24 and Ser-263 leading to its nuclear import. Interacts with NLK. Interacts with SIRT1; the interaction results in the deacetylation of FOXO1 leading to activation of FOXO1-mediated transcription of genes involved in DNA repair and stress resistance. Binds to CDK1. Interacts with the 14-3-3 proteins, YWHAG and YWHAZ; the interactions require insulin-stimulated phosphorylation on Thr-24, promote nuclear exit and loss of transcriptional activity. Interacts with SKP2; the interaction ubiquitinates FOXO1 leading to its proteasomal degradation. The interaction requires the presence of KRIT1. Interacts (via the C-terminal half) with ATF4 (via its DNA binding domain); the interaction occurs in osteoblasts, regulates glucose homeostasis via suppression of beta-cell proliferation and subsequent decrease in insulin production. Interacts with PRMT1; the interaction methylates FOXO1, prevents PKB/AKT1 phosphorylation and retains FOXO1 in the nucleus. Interacts with EP300 and CREBBP; the interactions acetylate FOXO1. Interacts with SIRT2; the interaction is disrupted in response to oxidative stress or serum deprivation, leading to increased level of acetylated FOXO1, which promotes stress-induced autophagy by stimulating E1-like activating enzyme ATG7. Interacts (acetylated form) with ATG7; the interaction is increased in response to oxidative stress or serum deprivation and promotes the autophagic process leading to cell death. Interacts (acetylated form) with PPARG. Interacts with XBP1; this interaction is direct and leads to FOXO1 ubiquitination and degradation via the proteasome pathway. Interacts (via the Fork-head domain) with CEBPA; the interaction increases when FOXO1 is deacetylated. Interacts with WDFY2. Forms a complex with WDFY2 and AKT1. Interacts with CRY1. Interacts with PPIA/CYPA; the interaction promotes FOXO1 dephosphorylation, nuclear accumulation and transcriptional activity. Interacts with TOX4; FOXO1 is required for full induction of TOX4-dependent activity and the interaction is inhibited by insulin. Interacts (when phosphorylated on Ser-226) with STUB1/CHIP. Post-translationally, phosphorylation by NLK promotes nuclear export and inhibits the transcriptional activity. In response to growth factors, phosphorylation on Thr-24, Ser-226 and Ser-292 by PKB/AKT1 promotes nuclear export and inactivation of transactivational activity. Phosphorylation on Thr-24 is required for binding 14-3-3 proteins. Phosphorylation of Ser-226 decreases DNA-binding activity and promotes the phosphorylation of Thr-24 and Ser-289, permitting phosphorylation of Ser-292 and Ser-295, probably by CDK1, leading to nuclear exclusion and loss of function. Stress signals, such as response to oxygen or nitric oxide, attenuate the PKB/AKT1-mediated phosphorylation leading to nuclear retention. Phosphorylation of Ser-299 is independent of IGF1 and leads to reduced function. Dephosphorylated on Thr-24 and Ser-226 by PP2A in beta-cells under oxidative stress leading to nuclear retention. Phosphorylation of Ser-219 by CDK1 disrupts binding of 14-3-3 proteins leading to nuclear accumulation and has no effect on DNA binding nor transcriptional activity. Phosphorylation by STK4/MST1 on Ser-182, upon oxidative stress, inhibits binding to 14-3-3 proteins and nuclear export. PPIA/CYPA promotes its dephosphorylation on Ser-226. In terms of processing, ubiquitinated by SKP2. Ubiquitination leads to proteasomal degradation. Ubiquitinated by STUB1/CHIP; when Ser-226 is phosphorylated. Methylation inhibits AKT1-mediated phosphorylation at Ser-226 and is increased by oxidative stress. Post-translationally, acetylated. Acetylation at Lys-232 and Lys-244 are necessary for autophagic cell death induction. Deacetylated by SIRT2 in response to oxidative stress or serum deprivation, thereby negatively regulating FOXO1-mediated autophagic cell death. Once in the nucleus, acetylated by CREBBP/EP300. Acetylation diminishes the interaction with target DNA and attenuates the transcriptional activity. It increases the phosphorylation at Ser-226. Deacetylation by SIRT1 results in reactivation of the transcriptional activity. Oxidative stress by hydrogen peroxide treatment appears to promote deacetylation and uncoupling of insulin-induced phosphorylation. By contrast, resveratrol acts independently of acetylation. Acetylated at Lys-393, promoting its localization to the nucleus and transcription factor activity. Deacetylation at Lys-393 by SIRT6, promotes its translocation into the cytoplasm, preventing its transcription factor activity. Deacetylation and subsequent inhibition by SIRT6 has different effects depending on cell types: it inhibits gluconeogenesis in hepatocytes, promotes glucose sensing in pancreatic beta-cells and regulates lipid catabolism in brown adipocytes.

The protein resides in the cytoplasm. It localises to the nucleus. Its function is as follows. Transcription factor that is the main target of insulin signaling and regulates metabolic homeostasis in response to oxidative stress. Binds to the insulin response element (IRE) with consensus sequence 5'-TT[G/A]TTTTG-3' and the related Daf-16 family binding element (DBE) with consensus sequence 5'-TT[G/A]TTTAC-3'. Activity suppressed by insulin. Main regulator of redox balance and osteoblast numbers and controls bone mass. Orchestrates the endocrine function of the skeleton in regulating glucose metabolism. Also acts as a key regulator of chondrogenic commitment of skeletal progenitor cells in response to lipid availability: when lipids levels are low, translocates to the nucleus and promotes expression of SOX9, which induces chondrogenic commitment and suppresses fatty acid oxidation. Acts synergistically with ATF4 to suppress osteocalcin/BGLAP activity, increasing glucose levels and triggering glucose intolerance and insulin insensitivity. Also suppresses the transcriptional activity of RUNX2, an upstream activator of osteocalcin/BGLAP. Acts as an inhibitor of glucose sensing in pancreatic beta cells by acting as a transcription repressor and suppressing expression of PDX1. In hepatocytes, promotes gluconeogenesis by acting together with PPARGC1A and CEBPA to activate the expression of genes such as IGFBP1, G6PC1 and PCK1. Also promotes gluconeogenesis by directly promoting expression of PPARGC1A and G6PC1. Important regulator of cell death acting downstream of CDK1, PKB/AKT1 and STK4/MST1. Promotes neural cell death. Mediates insulin action on adipose tissue. Regulates the expression of adipogenic genes such as PPARG during preadipocyte differentiation and, adipocyte size and adipose tissue-specific gene expression in response to excessive calorie intake. Regulates the transcriptional activity of GADD45A and repair of nitric oxide-damaged DNA in beta-cells. Required for the autophagic cell death induction in response to starvation or oxidative stress in a transcription-independent manner. Mediates the function of MLIP in cardiomyocytes hypertrophy and cardiac remodeling. Positive regulator of apoptosis in cardiac smooth muscle cells as a result of its transcriptional activation of pro-apoptotic genes. Regulates endothelial cell (EC) viability and apoptosis in a PPIA/CYPA-dependent manner via transcription of CCL2 and BCL2L11 which are involved in EC chemotaxis and apoptosis. In Bos taurus (Bovine), this protein is Forkhead box protein O1 (FOXO1).